The following is a 727-amino-acid chain: Engulfment and cell motility protein 1 (727 aa).

Tyr18 carries the post-translational modification Phosphotyrosine; by HCK. N6-acetyllysine occurs at positions 100 and 105. Tyr216 is subject to Phosphotyrosine; by HCK. The region spanning Ala319–Leu492 is the ELMO domain. Ser344 is subject to Phosphoserine. Tyr395 and Tyr511 each carry phosphotyrosine; by HCK. One can recognise a PH domain in the interval Arg555 to Asp676. Residues Pro707–Pro714 carry the SH3-binding motif. Phosphotyrosine; by HCK is present on Tyr720.

Interacts directly with the SH3-domain of DOCK1 via its SH3-binding site. Probably forms a heterotrimeric complex with DOCK1 and RAC1. Interacts with PLEKHG6. Interacts with HCK (via SH3 domain). Interacts with ADGRB1. Interacts with ADGRB3. Interacts with DOCK5. Phosphorylated by HCK.

It localises to the cytoplasm. Its subcellular location is the cell membrane. Functionally, involved in cytoskeletal rearrangements required for phagocytosis of apoptotic cells and cell motility. Acts in association with DOCK1 and CRK. Was initially proposed to be required in complex with DOCK1 to activate Rac Rho small GTPases. May enhance the guanine nucleotide exchange factor (GEF) activity of DOCK1. The protein is Engulfment and cell motility protein 1 (Elmo1) of Mus musculus (Mouse).